A 243-amino-acid chain; its full sequence is MKKLVFTFKRIDHPAQDLAVKFHGFLMEQLDSDYVDYLHQQQTNPYATKVIQGKENTQWVVHLLTDDHEDKVFMTLLQIKEVSLNDLPKLSVEKVEIQELGADKLLEIFNSEENQTYFSIIFETPTGFKSQGSYVIFPSMRLIFQSLMQKYGRLVENQPEIEEDTLDYLSEHSTITNYRLETSYFRVHRQRIPAFRGKLTFKVQGAKTLKAYVKMLLTFGEYSGLGMKTSLGMGGIKLEERKD.

It belongs to the CRISPR-associated endoribonuclease Cas6 family. As to quaternary structure, part of the Csm effector complex that includes at least Cas10(1), Csm2(3), Csm3(5), Csm4(1); the presence of Csm5 and Cas6 may depend on the processing state of precursor crRNA. Csm with a precursor crRNA does not include Csm5, while Cas6, the enzyme probably involved in pre-crRNA processing, is found associated with a subset of the Csm complex that is probably in the process of pre-crRNA maturation. The Csm complex is elongated and slightly twisted with a maximal length of 215 Angstroms and a diameter of 75-80 Angstroms. It has been modeled to have a central protein filamant of Csm3 subunits along which the dsRNA helix of paired crRNA and target RNA binds. The filament is capped at one end by Cas10 and Csm4 and at the other end by Csm5; ssDNA is thought to bind to the N-terminal HD domain of Cas10.

Functionally, CRISPR (clustered regularly interspaced short palindromic repeat) is an adaptive immune system that provides protection against mobile genetic elements (viruses, transposable elements and conjugative plasmids). CRISPR clusters contain spacers, sequences complementary to antecedent mobile elements, and target invading nucleic acids. CRISPR clusters are transcribed and processed into CRISPR RNA (crRNA). The type III-A Csm effector complex binds crRNA and acts as a crRNA-guided RNase, DNase and cyclic oligoadenylate synthase; binding of target RNA cognate to the crRNA is required for all activities. In a heterologous host this Csm effector complex restricts ssRNA phage MS2, suggesting it may target RNA viruses in vivo. Its function is as follows. Csm functions as a non-specific ssDNase. Base-pairing between crRNA and target RNA to form a ternary Csm complex activates a ssDNase activity; target RNA cleavage suppresses the ssDNase, a temporal control that prevents uncontrolled DNA degradation. Viral RNA transcripts probably tether the Csm complex to the viral genome, recruiting Cas10 ssDNA activity which is able to degrade DNA in the transcription bubble, spatially controlling the DNase activity. In terms of biological role, this protein processes pre-crRNA into individual crRNA units. The protein is CRISPR-associated endoribonuclease Cas6 of Streptococcus thermophilus.